The sequence spans 397 residues: CCA-adding enzyme (397 aa).

2 residues coordinate ATP: glycine 32 and arginine 35. Positions 32 and 35 each coordinate CTP. Positions 45 and 47 each coordinate Mg(2+). ATP-binding residues include arginine 116, aspartate 159, arginine 162, arginine 165, and arginine 168. CTP contacts are provided by arginine 116, aspartate 159, arginine 162, arginine 165, and arginine 168.

The protein belongs to the tRNA nucleotidyltransferase/poly(A) polymerase family. Bacterial CCA-adding enzyme type 3 subfamily. In terms of assembly, homodimer. It depends on Mg(2+) as a cofactor.

It catalyses the reaction a tRNA precursor + 2 CTP + ATP = a tRNA with a 3' CCA end + 3 diphosphate. It carries out the reaction a tRNA with a 3' CCA end + 2 CTP + ATP = a tRNA with a 3' CCACCA end + 3 diphosphate. Catalyzes the addition and repair of the essential 3'-terminal CCA sequence in tRNAs without using a nucleic acid template. Adds these three nucleotides in the order of C, C, and A to the tRNA nucleotide-73, using CTP and ATP as substrates and producing inorganic pyrophosphate. tRNA 3'-terminal CCA addition is required both for tRNA processing and repair. Also involved in tRNA surveillance by mediating tandem CCA addition to generate a CCACCA at the 3' terminus of unstable tRNAs. While stable tRNAs receive only 3'-terminal CCA, unstable tRNAs are marked with CCACCA and rapidly degraded. This is CCA-adding enzyme from Latilactobacillus sakei subsp. sakei (strain 23K) (Lactobacillus sakei subsp. sakei).